We begin with the raw amino-acid sequence, 447 residues long: Cysteine--tRNA ligase (447 aa).

C28 contacts Zn(2+). The 'HIGH' region motif lies at 30 to 40; the sequence is PTVYNYIHVGN. Residues C211, H236, and E240 each contribute to the Zn(2+) site. The 'KMSKS' region signature appears at 268-272; it reads KMSKS. K271 contributes to the ATP binding site.

It belongs to the class-I aminoacyl-tRNA synthetase family. As to quaternary structure, monomer. Zn(2+) is required as a cofactor.

The protein localises to the cytoplasm. The enzyme catalyses tRNA(Cys) + L-cysteine + ATP = L-cysteinyl-tRNA(Cys) + AMP + diphosphate. In Streptococcus pneumoniae serotype 4 (strain ATCC BAA-334 / TIGR4), this protein is Cysteine--tRNA ligase.